The following is an 88-amino-acid chain: Small ribosomal subunit protein uS15 (88 aa).

It belongs to the universal ribosomal protein uS15 family. Part of the 30S ribosomal subunit. Forms a bridge to the 50S subunit in the 70S ribosome, contacting the 23S rRNA.

Functionally, one of the primary rRNA binding proteins, it binds directly to 16S rRNA where it helps nucleate assembly of the platform of the 30S subunit by binding and bridging several RNA helices of the 16S rRNA. Forms an intersubunit bridge (bridge B4) with the 23S rRNA of the 50S subunit in the ribosome. In Verminephrobacter eiseniae (strain EF01-2), this protein is Small ribosomal subunit protein uS15.